A 107-amino-acid chain; its full sequence is UPF0060 membrane protein PSHAa1175 (107 aa).

A run of 4 helical transmembrane segments spans residues 3 to 23 (IFGLFLITALAEIIGCYLPYL), 30 to 50 (SVWLLVPAALSLAIFAWLLSL), 60 to 80 (AAYGGVYIFMAILWLWAVDGI), and 84 to 104 (TWDLVGSGVALVGMAIIMFAP).

The protein belongs to the UPF0060 family.

The protein localises to the cell inner membrane. This chain is UPF0060 membrane protein PSHAa1175, found in Pseudoalteromonas translucida (strain TAC 125).